Reading from the N-terminus, the 172-residue chain is uncharacterized protein (172 aa).

This is an uncharacterized protein from Homo sapiens (Human).